The primary structure comprises 368 residues: tRNA/tmRNA (uracil-C(5))-methyltransferase (368 aa).

Gln-192, Tyr-220, Asn-225, Glu-241, and Asp-301 together coordinate S-adenosyl-L-methionine. Residue Cys-326 is the Nucleophile of the active site. Glu-360 serves as the catalytic Proton acceptor.

The protein belongs to the class I-like SAM-binding methyltransferase superfamily. RNA M5U methyltransferase family. TrmA subfamily.

The enzyme catalyses uridine(54) in tRNA + S-adenosyl-L-methionine = 5-methyluridine(54) in tRNA + S-adenosyl-L-homocysteine + H(+). It catalyses the reaction uridine(341) in tmRNA + S-adenosyl-L-methionine = 5-methyluridine(341) in tmRNA + S-adenosyl-L-homocysteine + H(+). Functionally, dual-specificity methyltransferase that catalyzes the formation of 5-methyluridine at position 54 (m5U54) in all tRNAs, and that of position 341 (m5U341) in tmRNA (transfer-mRNA). This Actinobacillus pleuropneumoniae serotype 5b (strain L20) protein is tRNA/tmRNA (uracil-C(5))-methyltransferase.